Here is a 521-residue protein sequence, read N- to C-terminus: NAD(P)H-quinone oxidoreductase subunit 2 (521 aa).

The next 14 helical transmembrane spans lie at I16 to G36, V40 to V60, L80 to V100, L110 to A130, L133 to Y153, L168 to L188, L212 to V232, P246 to I266, W280 to L300, M308 to S328, V336 to F356, L380 to G400, I402 to V422, and V468 to F488.

The protein belongs to the complex I subunit 2 family. In terms of assembly, NDH-1 can be composed of about 15 different subunits; different subcomplexes with different compositions have been identified which probably have different functions.

Its subcellular location is the cellular thylakoid membrane. The enzyme catalyses a plastoquinone + NADH + (n+1) H(+)(in) = a plastoquinol + NAD(+) + n H(+)(out). It catalyses the reaction a plastoquinone + NADPH + (n+1) H(+)(in) = a plastoquinol + NADP(+) + n H(+)(out). In terms of biological role, NDH-1 shuttles electrons from an unknown electron donor, via FMN and iron-sulfur (Fe-S) centers, to quinones in the respiratory and/or the photosynthetic chain. The immediate electron acceptor for the enzyme in this species is believed to be plastoquinone. Couples the redox reaction to proton translocation, and thus conserves the redox energy in a proton gradient. Cyanobacterial NDH-1 also plays a role in inorganic carbon-concentration. This Synechocystis sp. (strain ATCC 27184 / PCC 6803 / Kazusa) protein is NAD(P)H-quinone oxidoreductase subunit 2.